The following is a 196-amino-acid chain: NADH-quinone oxidoreductase subunit B (196 aa).

[4Fe-4S] cluster-binding residues include cysteine 63, cysteine 64, cysteine 129, and cysteine 159.

It belongs to the complex I 20 kDa subunit family. As to quaternary structure, NDH-1 is composed of 14 different subunits. Subunits NuoB, C, D, E, F, and G constitute the peripheral sector of the complex. Requires [4Fe-4S] cluster as cofactor.

It localises to the cell inner membrane. It catalyses the reaction a quinone + NADH + 5 H(+)(in) = a quinol + NAD(+) + 4 H(+)(out). Functionally, NDH-1 shuttles electrons from NADH, via FMN and iron-sulfur (Fe-S) centers, to quinones in the respiratory chain. The immediate electron acceptor for the enzyme in this species is believed to be a menaquinone. Couples the redox reaction to proton translocation (for every two electrons transferred, four hydrogen ions are translocated across the cytoplasmic membrane), and thus conserves the redox energy in a proton gradient. The chain is NADH-quinone oxidoreductase subunit B from Bacteroides fragilis (strain ATCC 25285 / DSM 2151 / CCUG 4856 / JCM 11019 / LMG 10263 / NCTC 9343 / Onslow / VPI 2553 / EN-2).